A 302-amino-acid polypeptide reads, in one-letter code: Sulfate adenylyltransferase subunit 2 (302 aa).

Positions 280–302 (RQGRAIDHDQSGSMELKKRQGYF) are disordered.

It belongs to the PAPS reductase family. CysD subfamily. As to quaternary structure, heterodimer composed of CysD, the smaller subunit, and CysN.

The enzyme catalyses sulfate + ATP + H(+) = adenosine 5'-phosphosulfate + diphosphate. Its pathway is sulfur metabolism; hydrogen sulfide biosynthesis; sulfite from sulfate: step 1/3. Functionally, with CysN forms the ATP sulfurylase (ATPS) that catalyzes the adenylation of sulfate producing adenosine 5'-phosphosulfate (APS) and diphosphate, the first enzymatic step in sulfur assimilation pathway. APS synthesis involves the formation of a high-energy phosphoric-sulfuric acid anhydride bond driven by GTP hydrolysis by CysN coupled to ATP hydrolysis by CysD. The protein is Sulfate adenylyltransferase subunit 2 of Vibrio cholerae serotype O1 (strain ATCC 39315 / El Tor Inaba N16961).